A 23-amino-acid chain; its full sequence is Dahlein-4.3 (23 aa).

Expressed by the skin dorsal glands.

It is found in the secreted. In terms of biological role, has no antimicrobial activity. This Ranoidea dahlii (Dahl's aquatic frog) protein is Dahlein-4.3.